Consider the following 576-residue polypeptide: Zinc finger protein 791 (576 aa).

The 87-residue stretch at 4 to 90 folds into the KRAB domain; the sequence is VAFEDVSVSF…AENFSPNLSV (87 aa). 17 C2H2-type zinc fingers span residues 100–122, 132–154, 160–182, 188–210, 216–238, 244–266, 272–294, 300–322, 328–350, 356–378, 384–406, 412–434, 440–462, 468–490, 496–518, 524–546, and 552–574; these read YECT…MRSH, YKCK…ERSH, YKCK…ERTH, YECK…ERIH, YECK…ERTH, YACK…MITH, YKCK…ERIH, YKCK…VRVH, YECK…KRNH, YECK…MITH, YKCR…ERTH, YECK…KRTH, YECK…MRMH, YKCK…TRIH, and LECK…MRMH.

This sequence belongs to the krueppel C2H2-type zinc-finger protein family.

It localises to the nucleus. Functionally, may be involved in transcriptional regulation. This Homo sapiens (Human) protein is Zinc finger protein 791 (ZNF791).